Reading from the N-terminus, the 308-residue chain is GTPase Era (308 aa).

The region spanning 14–181 (RCGFVALIGA…KQALAAMVPP (168 aa)) is the Era-type G domain. Positions 22–29 (GAPNVGKS) are G1. Position 22–29 (22–29 (GAPNVGKS)) interacts with GTP. Residues 48-52 (QTTRA) are G2. A G3 region spans residues 69–72 (DTPG). GTP-binding positions include 69–73 (DTPGI) and 131–134 (NKVD). Positions 131-134 (NKVD) are G4. The G5 stretch occupies residues 160 to 162 (ISA). In terms of domain architecture, KH type-2 spans 212 to 289 (LHQELPYQST…HLFLFVKVRE (78 aa)).

This sequence belongs to the TRAFAC class TrmE-Era-EngA-EngB-Septin-like GTPase superfamily. Era GTPase family. Monomer.

It localises to the cytoplasm. It is found in the cell inner membrane. Its function is as follows. An essential GTPase that binds both GDP and GTP, with rapid nucleotide exchange. Plays a role in 16S rRNA processing and 30S ribosomal subunit biogenesis and possibly also in cell cycle regulation and energy metabolism. The chain is GTPase Era from Bradyrhizobium sp. (strain BTAi1 / ATCC BAA-1182).